The following is a 1169-amino-acid chain: Chromosome partition protein Smc (1169 aa).

Position 32–39 (32–39) interacts with ATP; sequence PNGCGKSN. Coiled-coil stretches lie at residues 170-507 and 659-1030; these read ISKY…ALGE and REQQ…FQSL.

It belongs to the SMC family. As to quaternary structure, homodimer.

The protein localises to the cytoplasm. Its function is as follows. Required for chromosome condensation and partitioning. The protein is Chromosome partition protein Smc of Coxiella burnetii (strain RSA 493 / Nine Mile phase I).